Consider the following 237-residue polypeptide: Ribosomal RNA small subunit methyltransferase G (237 aa).

Residues Gly78, Phe83, 129–130 (AE), and Arg148 contribute to the S-adenosyl-L-methionine site. The disordered stretch occupies residues 218-237 (KKETPNKYPRKAGMPNKRPL).

This sequence belongs to the methyltransferase superfamily. RNA methyltransferase RsmG family.

It is found in the cytoplasm. Its function is as follows. Specifically methylates the N7 position of a guanine in 16S rRNA. This Streptococcus pneumoniae serotype 19F (strain G54) protein is Ribosomal RNA small subunit methyltransferase G.